Reading from the N-terminus, the 336-residue chain is 3-isopropylmalate dehydrogenase (336 aa).

Residues Arg-87, Arg-97, Arg-121, and Asp-211 each coordinate substrate. Positions 211, 235, and 239 each coordinate Mg(2+). Gly-271 to Asp-283 contributes to the NAD(+) binding site.

Belongs to the isocitrate and isopropylmalate dehydrogenases family. LeuB type 2 subfamily. Homodimer. Mg(2+) serves as cofactor. It depends on Mn(2+) as a cofactor.

Its subcellular location is the cytoplasm. The catalysed reaction is (2R,3S)-3-isopropylmalate + NAD(+) = 4-methyl-2-oxopentanoate + CO2 + NADH. The protein operates within amino-acid biosynthesis; L-leucine biosynthesis; L-leucine from 3-methyl-2-oxobutanoate: step 3/4. In terms of biological role, catalyzes the oxidation of 3-carboxy-2-hydroxy-4-methylpentanoate (3-isopropylmalate) to 3-carboxy-4-methyl-2-oxopentanoate. The product decarboxylates to 4-methyl-2 oxopentanoate. The sequence is that of 3-isopropylmalate dehydrogenase from Mycobacterium leprae (strain Br4923).